Reading from the N-terminus, the 181-residue chain is Probable inactive acireductone dioxygenase 2 (181 aa).

Belongs to the acireductone dioxygenase (ARD) family.

The protein localises to the cytoplasm. It localises to the nucleus. Its function is as follows. Probable inactive acireductone dioxygenase. In Sorghum bicolor (Sorghum), this protein is Probable inactive acireductone dioxygenase 2.